The following is a 157-amino-acid chain: Crossover junction endodeoxyribonuclease RuvC (157 aa).

Catalysis depends on residues Asp7, Glu67, and Asp140. Mg(2+)-binding residues include Asp7, Glu67, and Asp140.

The protein belongs to the RuvC family. In terms of assembly, homodimer which binds Holliday junction (HJ) DNA. The HJ becomes 2-fold symmetrical on binding to RuvC with unstacked arms; it has a different conformation from HJ DNA in complex with RuvA. In the full resolvosome a probable DNA-RuvA(4)-RuvB(12)-RuvC(2) complex forms which resolves the HJ. Mg(2+) serves as cofactor.

Its subcellular location is the cytoplasm. The catalysed reaction is Endonucleolytic cleavage at a junction such as a reciprocal single-stranded crossover between two homologous DNA duplexes (Holliday junction).. Its function is as follows. The RuvA-RuvB-RuvC complex processes Holliday junction (HJ) DNA during genetic recombination and DNA repair. Endonuclease that resolves HJ intermediates. Cleaves cruciform DNA by making single-stranded nicks across the HJ at symmetrical positions within the homologous arms, yielding a 5'-phosphate and a 3'-hydroxyl group; requires a central core of homology in the junction. The consensus cleavage sequence is 5'-(A/T)TT(C/G)-3'. Cleavage occurs on the 3'-side of the TT dinucleotide at the point of strand exchange. HJ branch migration catalyzed by RuvA-RuvB allows RuvC to scan DNA until it finds its consensus sequence, where it cleaves and resolves the cruciform DNA. The protein is Crossover junction endodeoxyribonuclease RuvC of Rickettsia bellii (strain OSU 85-389).